Here is a 368-residue protein sequence, read N- to C-terminus: Endoglucanase (368 aa).

An N-terminal signal peptide occupies residues 1 to 21 (MNVLRSGIVTMLLLAAFSVQA). The active-site Proton donor is Glu-55. Residue Asp-116 is the Nucleophile of the active site.

It belongs to the glycosyl hydrolase 8 (cellulase D) family.

The protein localises to the secreted. The enzyme catalyses Endohydrolysis of (1-&gt;4)-beta-D-glucosidic linkages in cellulose, lichenin and cereal beta-D-glucans.. It participates in glycan metabolism; bacterial cellulose biosynthesis. Functionally, hydrolyzes carboxymethylcellulose. The polypeptide is Endoglucanase (bcsZ) (Escherichia coli (strain K12)).